The chain runs to 495 residues: Probable plastidic glucose transporter 3 (495 aa).

12 helical membrane-spanning segments follow: residues 55–75, 97–117, 131–151, 154–174, 183–203, 214–234, 294–314, 330–350, 357–377, 384–404, 425–445, and 451–471; these read LPHV…LGVV, LVVS…GLVA, LPMI…GMLL, FLVG…VTEV, YGSS…FAGI, ICFW…ELCV, VVFI…NAVF, SANI…VVLM, VLLI…AIAY, FGTL…FATG, ALAV…LLFL, and LGSV…VIFV.

It belongs to the major facilitator superfamily. Sugar transporter (TC 2.A.1.1) family.

Its subcellular location is the plastid. It localises to the chloroplast membrane. Its function is as follows. May be involved in the efflux of glucose towards the cytosol. The polypeptide is Probable plastidic glucose transporter 3 (Arabidopsis thaliana (Mouse-ear cress)).